The sequence spans 460 residues: Probable carboxypeptidase TRV_02791 (460 aa).

An N-terminal signal peptide occupies residues 1–22 (MQKTYLWALVSLLASSLVDARS). Residue Asn98 is glycosylated (N-linked (GlcNAc...) asparagine). Position 175 (Asp175) interacts with Zn(2+). Glu207 (proton acceptor) is an active-site residue. Zn(2+) is bound at residue Glu208. A glycan (N-linked (GlcNAc...) asparagine) is linked at Asn395.

Belongs to the peptidase M20A family. The cofactor is Zn(2+).

It localises to the secreted. The chain is Probable carboxypeptidase TRV_02791 from Trichophyton verrucosum (strain HKI 0517).